Here is a 290-residue protein sequence, read N- to C-terminus: 33 kDa chaperonin (290 aa).

2 disulfides stabilise this stretch: Cys-235–Cys-237 and Cys-268–Cys-271.

The protein belongs to the HSP33 family. Under oxidizing conditions two disulfide bonds are formed involving the reactive cysteines. Under reducing conditions zinc is bound to the reactive cysteines and the protein is inactive.

Its subcellular location is the cytoplasm. Functionally, redox regulated molecular chaperone. Protects both thermally unfolding and oxidatively damaged proteins from irreversible aggregation. Plays an important role in the bacterial defense system toward oxidative stress. This chain is 33 kDa chaperonin, found in Streptococcus pneumoniae (strain CGSP14).